Reading from the N-terminus, the 393-residue chain is Cysteine protease ATG4B (393 aa).

N-acetylmethionine is present on Met-1. The residue at position 34 (Ser-34) is a Phosphoserine; by PKB/AKT1 and PKB/AKT2. The active-site Nucleophile is Cys-74. Cys-189 is modified (S-nitrosocysteine). Residues Asp-278 and His-280 contribute to the active site. 2 positions are modified to S-nitrosocysteine: Cys-292 and Cys-301. Cys-292 and Cys-361 form a disulfide bridge. Ser-316 bears the Phosphoserine; by ULK1 mark. Ser-383 bears the Phosphoserine; by STK26 mark. Positions 388–391 (FEIL) match the LIR motif. A Phosphoserine modification is found at Ser-392.

The protein belongs to the peptidase C54 family. In terms of assembly, interacts with PFKP; promoting phosphorylation of ATG4B at Ser-34. Interacts with GBP7. In terms of processing, phosphorylation at Ser-383 and Ser-392 promotes autophagy by increasing protein delipidation activity without affecting proteolytic activation of ATG8 proteins. Phosphorylation at Ser-316 by ULK1 inhibits autophagy by decreasing both proteolytic activation and delipidation activities. Phosphorylation at Ser-316 is dephosphorylated by protein phosphatase 2A (PP2A). Phosphorylation at Ser-34 by AKT2 promotes its hydrolase activity, leading to increased proteolytic activation and delipidation of ATG8 family proteins. Phosphorylation at Ser-34 by AKT1 promotes mitochondrial localization and inhibition of the F1F0-ATP synthase activity, leading to elevation of mitochondrial reactive oxygen species (ROS). Ubiquitinated by RNF5, leading to its degradation by the proteasome. Post-translationally, S-nitrosylation at Cys-189 and Cys-292 in response to high glucose decreases both proteolytic activation and delipidation activities. In terms of processing, O-glycosylated by OGT, leading to increase protease activity, thereby promoting the proteolytic activation of ATG8 family proteins. Forms reversible intrachain disulfide bonds in response to oxidative stress. Forms interchain disulfide bonds, leading to formation of homooligomers in response to oxidation.

The protein localises to the cytoplasm. The protein resides in the cytosol. Its subcellular location is the cytoplasmic vesicle. It localises to the autophagosome. It is found in the endoplasmic reticulum. The protein localises to the mitochondrion. It catalyses the reaction [protein]-C-terminal L-amino acid-glycyl-phosphatidylethanolamide + H2O = [protein]-C-terminal L-amino acid-glycine + a 1,2-diacyl-sn-glycero-3-phosphoethanolamine. The enzyme catalyses [protein]-C-terminal L-amino acid-glycyl-phosphatidylserine + H2O = [protein]-C-terminal L-amino acid-glycine + a 1,2-diacyl-sn-glycero-3-phospho-L-serine. Inhibited by N-ethylmaleimide. Redox-regulated during autophagy since reducing conditions activate ATG4A whereas an oxidizing environment such as the presence of H(2)O(2) inhibits its activity. The cysteine protease activity compounds is inhibited by styrylquinoline compounds 4-28 and LV-320. Its function is as follows. Cysteine protease that plays a key role in autophagy by mediating both proteolytic activation and delipidation of ATG8 family proteins. Required for canonical autophagy (macroautophagy), non-canonical autophagy as well as for mitophagy. The protease activity is required for proteolytic activation of ATG8 family proteins: cleaves the C-terminal amino acid of ATG8 proteins MAP1LC3A, MAP1LC3B, MAP1LC3C, GABARAPL1, GABARAPL2 and GABARAP, to reveal a C-terminal glycine. Exposure of the glycine at the C-terminus is essential for ATG8 proteins conjugation to phosphatidylethanolamine (PE) and insertion to membranes, which is necessary for autophagy. Protease activity is also required to counteract formation of high-molecular weight conjugates of ATG8 proteins (ATG8ylation): acts as a deubiquitinating-like enzyme that removes ATG8 conjugated to other proteins, such as ATG3. In addition to the protease activity, also mediates delipidation of ATG8 family proteins. Catalyzes delipidation of PE-conjugated forms of ATG8 proteins during macroautophagy. Also involved in non-canonical autophagy, a parallel pathway involving conjugation of ATG8 proteins to single membranes at endolysosomal compartments, by catalyzing delipidation of ATG8 proteins conjugated to phosphatidylserine (PS). Compared to other members of the family (ATG4A, ATG4C or ATG4C), constitutes the major protein for proteolytic activation of ATG8 proteins, while it displays weaker delipidation activity than other ATG4 paralogs. Involved in phagophore growth during mitophagy independently of its protease activity and of ATG8 proteins: acts by regulating ATG9A trafficking to mitochondria and promoting phagophore-endoplasmic reticulum contacts during the lipid transfer phase of mitophagy. The protein is Cysteine protease ATG4B of Homo sapiens (Human).